The sequence spans 490 residues: Cytochrome P450 2C6 (490 aa).

2 positions are modified to N6-acetyllysine: lysine 249 and lysine 375. Position 435 (cysteine 435) interacts with heme.

The protein belongs to the cytochrome P450 family. It depends on heme as a cofactor.

The protein resides in the endoplasmic reticulum membrane. It is found in the microsome membrane. The enzyme catalyses an organic molecule + reduced [NADPH--hemoprotein reductase] + O2 = an alcohol + oxidized [NADPH--hemoprotein reductase] + H2O + H(+). Functionally, cytochromes P450 are a group of heme-thiolate monooxygenases. In liver microsomes, this enzyme is involved in an NADPH-dependent electron transport pathway. It oxidizes a variety of structurally unrelated compounds, including steroids, fatty acids, and xenobiotics. This chain is Cytochrome P450 2C6 (Cyp2c6), found in Rattus norvegicus (Rat).